The primary structure comprises 293 residues: Extracellular metalloprotease PODANS_2_14170 (293 aa).

The signal sequence occupies residues 1 to 18 (MRFSLALAAAGLAQTAFA). N-linked (GlcNAc...) asparagine glycosylation occurs at asparagine 60. Histidine 206 lines the Zn(2+) pocket. Glutamate 207 is an active-site residue. Histidine 210 contributes to the Zn(2+) binding site. Cysteine 242 and cysteine 269 form a disulfide bridge.

This sequence belongs to the peptidase M43B family.

The protein resides in the secreted. Secreted metalloproteinase that allows assimilation of proteinaceous substrates. This Podospora anserina (strain S / ATCC MYA-4624 / DSM 980 / FGSC 10383) (Pleurage anserina) protein is Extracellular metalloprotease PODANS_2_14170.